The following is a 496-amino-acid chain: Probable CtpA-like serine protease (496 aa).

The span at 1–16 (MDDKQHTSSSDDERAE) shows a compositional bias: basic and acidic residues. Positions 1-27 (MDDKQHTSSSDDERAEIATSNQDQETN) are disordered. The segment covering 18–27 (ATSNQDQETN) has biased composition (polar residues). The helical transmembrane segment at 39-59 (FISILIGTILITAVITVVAYI) threads the bilayer. The PDZ domain occupies 124–206 (TKSFNEGVSG…TEVTLTVQRG (83 aa)). Active-site charge relay system residues include Ser329, Asp340, and Lys354.

The protein belongs to the peptidase S41A family.

It is found in the cell membrane. The protein is Probable CtpA-like serine protease of Staphylococcus aureus (strain COL).